We begin with the raw amino-acid sequence, 158 residues long: Transcription elongation factor GreA (158 aa).

Belongs to the GreA/GreB family.

Its function is as follows. Necessary for efficient RNA polymerase transcription elongation past template-encoded arresting sites. The arresting sites in DNA have the property of trapping a certain fraction of elongating RNA polymerases that pass through, resulting in locked ternary complexes. Cleavage of the nascent transcript by cleavage factors such as GreA or GreB allows the resumption of elongation from the new 3'terminus. GreA releases sequences of 2 to 3 nucleotides. The chain is Transcription elongation factor GreA from Salmonella typhi.